The primary structure comprises 278 residues: 4-diphosphocytidyl-2-C-methyl-D-erythritol kinase (278 aa).

Lysine 10 is a catalytic residue. An ATP-binding site is contributed by 93–103 (PMGGGLGGGSS). Aspartate 135 is an active-site residue.

Belongs to the GHMP kinase family. IspE subfamily.

The catalysed reaction is 4-CDP-2-C-methyl-D-erythritol + ATP = 4-CDP-2-C-methyl-D-erythritol 2-phosphate + ADP + H(+). It functions in the pathway isoprenoid biosynthesis; isopentenyl diphosphate biosynthesis via DXP pathway; isopentenyl diphosphate from 1-deoxy-D-xylulose 5-phosphate: step 3/6. Catalyzes the phosphorylation of the position 2 hydroxy group of 4-diphosphocytidyl-2C-methyl-D-erythritol. In Thiobacillus denitrificans (strain ATCC 25259 / T1), this protein is 4-diphosphocytidyl-2-C-methyl-D-erythritol kinase.